Reading from the N-terminus, the 765-residue chain is Polyribonucleotide nucleotidyltransferase (765 aa).

Aspartate 556 and aspartate 562 together coordinate Mg(2+). Residues 622 to 681 (PRITKISIPQNKIGEVIGPKGKTINQITEETGANISIEDDGTVFVSAVGGEAAEAAIEKI) form the KH domain. In terms of domain architecture, S1 motif spans 693–762 (GDRFLGTVVK…NRGKISLVPV (70 aa)).

It belongs to the polyribonucleotide nucleotidyltransferase family. Requires Mg(2+) as cofactor.

The protein localises to the cytoplasm. The catalysed reaction is RNA(n+1) + phosphate = RNA(n) + a ribonucleoside 5'-diphosphate. In terms of biological role, involved in mRNA degradation. Catalyzes the phosphorolysis of single-stranded polyribonucleotides processively in the 3'- to 5'-direction. This chain is Polyribonucleotide nucleotidyltransferase, found in Corynebacterium urealyticum (strain ATCC 43042 / DSM 7109).